The following is a 130-amino-acid chain: Small ribosomal subunit protein uS11 (130 aa).

The protein belongs to the universal ribosomal protein uS11 family. Part of the 30S ribosomal subunit. Interacts with proteins S7 and S18. Binds to IF-3.

Its function is as follows. Located on the platform of the 30S subunit, it bridges several disparate RNA helices of the 16S rRNA. Forms part of the Shine-Dalgarno cleft in the 70S ribosome. In Prochlorococcus marinus (strain NATL1A), this protein is Small ribosomal subunit protein uS11.